Consider the following 775-residue polypeptide: Endothelin-converting enzyme-like 1 (775 aa).

Topologically, residues 1–61 (MEAPYSMTAH…LPRWNRREVC (61 aa)) are cytoplasmic. Residues 30–52 (GTSLPPGFPRGSGRSASGSRSGL) are disordered. Residues 32–52 (SLPPGFPRGSGRSASGSRSGL) show a composition bias toward low complexity. A helical; Signal-anchor for type II membrane protein membrane pass occupies residues 62 to 82 (LLSGLVFAAGLCAILAAMLAL). At 83-775 (KYLGPGAAGG…MNPVHKCSVW (693 aa)) the chain is on the lumenal side. Residues 99-775 (GCPERKAFAR…MNPVHKCSVW (677 aa)) enclose the Peptidase M13 domain. 4 disulfide bridges follow: cysteine 124–cysteine 760, cysteine 132–cysteine 720, cysteine 188–cysteine 441, and cysteine 649–cysteine 772. N-linked (GlcNAc...) asparagine glycans are attached at residues asparagine 255 and asparagine 322. Histidine 612 is a Zn(2+) binding site. Glutamate 613 is an active-site residue. Histidine 616 serves as a coordination point for Zn(2+). An N-linked (GlcNAc...) asparagine glycan is attached at asparagine 656. Glutamate 672 contacts Zn(2+). Aspartate 676 acts as the Proton donor in catalysis.

It belongs to the peptidase M13 family. Zn(2+) serves as cofactor.

It localises to the membrane. Functionally, may contribute to the degradation of peptide hormones and be involved in the inactivation of neuronal peptides. This is Endothelin-converting enzyme-like 1 (Ecel1) from Mus musculus (Mouse).